The chain runs to 140 residues: Sex-regulated protein janus-B (140 aa).

R42 lines the substrate pocket. Residue H69 is the Proton acceptor of the active site. Position 110 to 112 (110 to 112 (SRT)) interacts with substrate.

The protein belongs to the janus family.

In terms of biological role, janA and janB regulate somatic sex differentiation. The polypeptide is Sex-regulated protein janus-B (janB) (Drosophila sechellia (Fruit fly)).